A 661-amino-acid chain; its full sequence is UvrABC system protein B (661 aa).

Residues 25–182 (KGLNNKKRSQ…NDLVNLQYER (158 aa)) form the Helicase ATP-binding domain. 38 to 45 (GITGSGKT) provides a ligand contact to ATP. Positions 91–114 (YYDYYQPEAYIPKTDVFIEKDSSI) match the Beta-hairpin motif. A Helicase C-terminal domain is found at 430 to 592 (QVEDLVGEIQ…IIPKTINRTI (163 aa)). Residues 621 to 656 (KAHIDKLRKEMLKAASNLEFEQAAKLRDQLKTLEEA) form the UVR domain.

It belongs to the UvrB family. In terms of assembly, forms a heterotetramer with UvrA during the search for lesions. Interacts with UvrC in an incision complex.

The protein resides in the cytoplasm. Its function is as follows. The UvrABC repair system catalyzes the recognition and processing of DNA lesions. A damage recognition complex composed of 2 UvrA and 2 UvrB subunits scans DNA for abnormalities. Upon binding of the UvrA(2)B(2) complex to a putative damaged site, the DNA wraps around one UvrB monomer. DNA wrap is dependent on ATP binding by UvrB and probably causes local melting of the DNA helix, facilitating insertion of UvrB beta-hairpin between the DNA strands. Then UvrB probes one DNA strand for the presence of a lesion. If a lesion is found the UvrA subunits dissociate and the UvrB-DNA preincision complex is formed. This complex is subsequently bound by UvrC and the second UvrB is released. If no lesion is found, the DNA wraps around the other UvrB subunit that will check the other stand for damage. In Rickettsia bellii (strain RML369-C), this protein is UvrABC system protein B.